A 330-amino-acid polypeptide reads, in one-letter code: Probable NAD(P)H-dependent D-xylose reductase xyl1 (330 aa).

The active-site Proton donor is the tyrosine 50. Histidine 112 provides a ligand contact to substrate. Residues 166 to 167 (SN), 215 to 224 (SSFGPLSFLE), and 271 to 281 (KSNNPTRLAQN) contribute to the NAD(+) site.

Belongs to the aldo/keto reductase family.

The enzyme catalyses xylitol + NAD(+) = D-xylose + NADH + H(+). It carries out the reaction xylitol + NADP(+) = D-xylose + NADPH + H(+). Its pathway is carbohydrate metabolism; D-xylose degradation. Functionally, catalyzes the initial reaction in the xylose utilization pathway by reducing D-xylose into xylitol. Xylose is a major component of hemicelluloses such as xylan. Most fungi utilize D-xylose via three enzymatic reactions, xylose reductase (XR), xylitol dehydrogenase (XDH), and xylulokinase, to form xylulose 5-phosphate, which enters pentose phosphate pathway. The protein is Probable NAD(P)H-dependent D-xylose reductase xyl1 (xyl1) of Aspergillus clavatus (strain ATCC 1007 / CBS 513.65 / DSM 816 / NCTC 3887 / NRRL 1 / QM 1276 / 107).